A 467-amino-acid chain; its full sequence is Argininosuccinate lyase (467 aa).

Residues serine 27, asparagine 114, and threonine 159 each contribute to the 2-(N(omega)-L-arginino)succinate site. The Proton acceptor role is filled by histidine 160. The active-site Proton donor is the serine 281. 2-(N(omega)-L-arginino)succinate-binding residues include asparagine 289, tyrosine 321, glutamine 326, and lysine 329.

It belongs to the lyase 1 family. Argininosuccinate lyase subfamily. In terms of assembly, homotetramer.

It catalyses the reaction 2-(N(omega)-L-arginino)succinate = fumarate + L-arginine. The protein operates within amino-acid biosynthesis; L-arginine biosynthesis; L-arginine from L-ornithine and carbamoyl phosphate: step 3/3. It participates in nitrogen metabolism; urea cycle; L-arginine and fumarate from (N(omega)-L-arginino)succinate: step 1/1. In Aquarana catesbeiana (American bullfrog), this protein is Argininosuccinate lyase (ASL).